A 158-amino-acid chain; its full sequence is UPF0260 protein RHE_CH01262 (158 aa).

The protein belongs to the UPF0260 family.

The sequence is that of UPF0260 protein RHE_CH01262 from Rhizobium etli (strain ATCC 51251 / DSM 11541 / JCM 21823 / NBRC 15573 / CFN 42).